Here is a 176-residue protein sequence, read N- to C-terminus: MSEIAQDSNVSIFSKNEKKARELILKLGLKPIQGVSRVTFKKKDGQIFAIDRPEVYKSQGGNFVVFGEAKVDDFTQRLAKAQESLQQNEGVLPAGQDAVSKDPQSIQADMQAAADSATDKPSADDAVDDAEVDETGLNADDIELVMQQAGVPRAKAAKALKEHDSDIVNAIMALSG.

One can recognise an NAC-A/B domain in the interval 14–78 (SKNEKKAREL…AKVDDFTQRL (65 aa)). Residues 85-127 (LQQNEGVLPAGQDAVSKDPQSIQADMQAAADSATDKPSADDAV) form a disordered region. The 40-residue stretch at 137–176 (LNADDIELVMQQAGVPRAKAAKALKEHDSDIVNAIMALSG) folds into the UBA domain.

It belongs to the NAC-alpha family. As to quaternary structure, part of the nascent polypeptide-associated complex (NAC), consisting of EGD2 and EGD1. NAC associates with ribosomes via EGD1.

Its subcellular location is the cytoplasm. The protein resides in the nucleus. In terms of biological role, component of the nascent polypeptide-associated complex (NAC), a dynamic component of the ribosomal exit tunnel, protecting the emerging polypeptides from interaction with other cytoplasmic proteins to ensure appropriate nascent protein targeting. The NAC complex also promotes mitochondrial protein import by enhancing productive ribosome interactions with the outer mitochondrial membrane and blocks the inappropriate interaction of ribosomes translating non-secretory nascent polypeptides with translocation sites in the membrane of the endoplasmic reticulum. EGD2 may also be involved in transcription regulation. In Kluyveromyces lactis (strain ATCC 8585 / CBS 2359 / DSM 70799 / NBRC 1267 / NRRL Y-1140 / WM37) (Yeast), this protein is Nascent polypeptide-associated complex subunit alpha (EGD2).